Reading from the N-terminus, the 360-residue chain is Protein Wnt-2 (360 aa).

Positions 1-25 (MNAPLGGIWLWLPLLLTWLSPEVSS) are cleaved as a signal peptide. 11 disulfides stabilise this stretch: Cys76–Cys87, Cys127–Cys135, Cys137–Cys157, Cys206–Cys220, Cys208–Cys215, Cys278–Cys309, Cys294–Cys304, Cys308–Cys348, Cys324–Cys339, Cys326–Cys336, and Cys331–Cys332. Ser212 carries O-palmitoleoyl serine; by PORCN lipidation. N-linked (GlcNAc...) asparagine glycosylation is present at Asn295.

It belongs to the Wnt family. Palmitoleoylation is required for efficient binding to frizzled receptors. Depalmitoleoylation leads to Wnt signaling pathway inhibition.

It localises to the secreted. Its subcellular location is the extracellular space. The protein resides in the extracellular matrix. Functionally, ligand for members of the frizzled family of seven transmembrane receptors. Probable developmental protein. May be a signaling molecule which affects the development of discrete regions of tissues. Is likely to signal over only few cell diameters. The polypeptide is Protein Wnt-2 (WNT2) (Carollia perspicillata (Seba's short-tailed bat)).